The primary structure comprises 178 residues: uncharacterized protein (178 aa).

The protein resides in the mitochondrion. This is an uncharacterized protein from Paramecium tetraurelia.